A 378-amino-acid polypeptide reads, in one-letter code: Probable selenide, water dikinase (378 aa).

The active site involves cysteine 33. ATP contacts are provided by residues lysine 36, 63–65 (GLD), aspartate 83, aspartate 106, and 158–160 (GQT). Aspartate 65 lines the Mg(2+) pocket. Aspartate 106 provides a ligand contact to Mg(2+). Aspartate 260 provides a ligand contact to Mg(2+).

Belongs to the selenophosphate synthase 1 family. Class I subfamily. In terms of assembly, homodimer. Mg(2+) is required as a cofactor.

The catalysed reaction is hydrogenselenide + ATP + H2O = selenophosphate + AMP + phosphate + 2 H(+). Synthesizes selenophosphate from selenide and ATP. In Caenorhabditis elegans, this protein is Probable selenide, water dikinase (seld-1).